The following is a 75-amino-acid chain: Metallothionein-like protein 1 (75 aa).

It belongs to the metallothionein superfamily. Type 15 family.

Its function is as follows. Metallothioneins have a high content of cysteine residues that bind various heavy metals. This chain is Metallothionein-like protein 1 (ALI1), found in Triticum aestivum (Wheat).